The sequence spans 516 residues: Membrane-bound transcription factor site-2 protease (516 aa).

At 1 to 3 (MIP) the chain is on the cytoplasmic side. Residues 4–24 (VSLVVVVVGGWTAVYLTDLVL) traverse the membrane as a helical segment. The Lumenal portion of the chain corresponds to 25–74 (KSSVYFKHSYEDWLENNGLSISPFHIRWQTAVFNRAFYSWGRRKARMLYQ). Transmembrane regions (helical) follow at residues 75-95 (WFNF…FLLG) and 96-107 (KTLIQTLGQMMA). At 108-141 (DSSYSSSSSSSSHSSSSSSSSSSSSSLYNEQVLQ) the chain is on the lumenal side. A helical transmembrane segment spans residues 142–166 (VVVPGINLPVNQLTYFFAAVLISGV). Residue H168 participates in Zn(2+) binding. E169 is an active-site residue. Transmembrane regions (helical) follow at residues 171-183 (GHGI…QVRF), 184-206 (NGFG…TTHL), and 226-248 (FILA…PFYY). Residue H172 coordinates Zn(2+). Residues 249 to 443 (TGVGVLITEV…LPVVVETFVK (195 aa)) are Lumenal-facing. A glycan (N-linked (GlcNAc...) asparagine) is linked at N334. 2 helical membrane-spanning segments follow: residues 444–461 (YLIS…VPCF) and 462–473 (ALDGQWILNSFL). The Lumenal segment spans residues 474–489 (DATLTSVIGDNDVKDL). A helical transmembrane segment spans residues 490–510 (IGFFILLGGSILLAANVALGL). Topologically, residues 511-516 (WMVTAR) are cytoplasmic.

This sequence belongs to the peptidase M50A family. Zn(2+) serves as cofactor.

It is found in the membrane. The protein localises to the cytoplasm. Its subcellular location is the golgi apparatus membrane. The catalysed reaction is Cleaves several transcription factors that are type-2 transmembrane proteins within membrane-spanning domains. Known substrates include sterol regulatory element-binding protein (SREBP) -1, SREBP-2 and forms of the transcriptional activator ATF6. SREBP-2 is cleaved at the site 477-DRSRILL-|-CVLTFLCLSFNPLTSLLQWGGA-505. The residues Asn-Pro, 11 residues distal to the site of cleavage in the membrane-spanning domain, are important for cleavage by S2P endopeptidase. Replacement of either of these residues does not prevent cleavage, but there is no cleavage if both of these residues are replaced.. Zinc metalloprotease that mediates intramembrane proteolysis of proteins such as ATF6, ATF6B, SREBF1/SREBP1 and SREBF2/SREBP2. Catalyzes the second step in the proteolytic activation of the sterol regulatory element-binding proteins (SREBPs) SREBF1/SREBP1 and SREBF2/SREBP2: cleaves SREBPs within the first transmembrane segment, thereby releasing the N-terminal segment with a portion of the transmembrane segment attached. Mature N-terminal SREBP fragments shuttle to the nucleus and activate gene transcription. Also mediates the second step in the proteolytic activation of the cyclic AMP-dependent transcription factor ATF-6 (ATF6 and ATF6B). Involved in intramembrane proteolysis during bone formation. In astrocytes and osteoblasts, upon DNA damage and ER stress, mediates the second step of the regulated intramembrane proteolytic activation of the transcription factor CREB3L1, leading to the inhibition of cell-cycle progression. This chain is Membrane-bound transcription factor site-2 protease, found in Bos taurus (Bovine).